A 291-amino-acid chain; its full sequence is ATP synthase gamma chain (291 aa).

It belongs to the ATPase gamma chain family. As to quaternary structure, F-type ATPases have 2 components, CF(1) - the catalytic core - and CF(0) - the membrane proton channel. CF(1) has five subunits: alpha(3), beta(3), gamma(1), delta(1), epsilon(1). CF(0) has three main subunits: a, b and c.

Its subcellular location is the cell inner membrane. Functionally, produces ATP from ADP in the presence of a proton gradient across the membrane. The gamma chain is believed to be important in regulating ATPase activity and the flow of protons through the CF(0) complex. The sequence is that of ATP synthase gamma chain from Pelagibacter ubique (strain HTCC1062).